The chain runs to 446 residues: Argininosuccinate synthase (446 aa).

Residues 17–25 (AFSGGLDTS) and Ala-43 each bind ATP. Tyr-99 contacts L-citrulline. 2 residues coordinate ATP: Gly-129 and Thr-131. L-aspartate is bound by residues Thr-131, Asn-135, and Asp-136. Residue Asn-135 coordinates L-citrulline. Asp-136 is an ATP binding site. L-citrulline is bound by residues Arg-139 and Ser-192. Position 194 (Asp-194) interacts with ATP. Residues Thr-201, Glu-203, and Glu-280 each coordinate L-citrulline.

The protein belongs to the argininosuccinate synthase family. Type 2 subfamily. Homotetramer.

The protein localises to the cytoplasm. The enzyme catalyses L-citrulline + L-aspartate + ATP = 2-(N(omega)-L-arginino)succinate + AMP + diphosphate + H(+). The protein operates within amino-acid biosynthesis; L-arginine biosynthesis; L-arginine from L-ornithine and carbamoyl phosphate: step 2/3. The chain is Argininosuccinate synthase from Variovorax paradoxus (strain S110).